A 170-amino-acid polypeptide reads, in one-letter code: NADH-dependent flavin reductase StyB (170 aa).

It belongs to the non-flavoprotein flavin reductase family. Homodimer.

The catalysed reaction is a reduced flavin + NAD(+) = an oxidized flavin + NADH + 2 H(+). The protein operates within aromatic compound metabolism. Functionally, reductase component of a two-component system that catalyzes the first step in the aerobic styrene degradation pathway by enantioselective epoxidation of the vinyl side chain. Utilizes NADH to reduce FAD, which is then transferred to the styrene monooxygenase StyA. The sequence is that of NADH-dependent flavin reductase StyB (styB) from Pseudomonas fluorescens.